Here is a 477-residue protein sequence, read N- to C-terminus: Ribulose bisphosphate carboxylase large chain (477 aa).

A propeptide spanning residues 1 to 2 (MS) is cleaved from the precursor. Proline 3 carries the N-acetylproline modification. The residue at position 14 (lysine 14) is an N6,N6,N6-trimethyllysine. Residues asparagine 123 and threonine 173 each contribute to the substrate site. Residue lysine 175 is the Proton acceptor of the active site. Position 177 (lysine 177) interacts with substrate. Positions 201, 203, and 204 each coordinate Mg(2+). Lysine 201 carries the post-translational modification N6-carboxylysine. Histidine 294 (proton acceptor) is an active-site residue. Substrate is bound by residues arginine 295, histidine 327, and serine 379.

Belongs to the RuBisCO large chain family. Type I subfamily. In terms of assembly, heterohexadecamer of 8 large chains and 8 small chains; disulfide-linked. The disulfide link is formed within the large subunit homodimers. Mg(2+) is required as a cofactor. Post-translationally, the disulfide bond which can form in the large chain dimeric partners within the hexadecamer appears to be associated with oxidative stress and protein turnover.

It is found in the plastid. It localises to the chloroplast. The catalysed reaction is 2 (2R)-3-phosphoglycerate + 2 H(+) = D-ribulose 1,5-bisphosphate + CO2 + H2O. It catalyses the reaction D-ribulose 1,5-bisphosphate + O2 = 2-phosphoglycolate + (2R)-3-phosphoglycerate + 2 H(+). RuBisCO catalyzes two reactions: the carboxylation of D-ribulose 1,5-bisphosphate, the primary event in carbon dioxide fixation, as well as the oxidative fragmentation of the pentose substrate in the photorespiration process. Both reactions occur simultaneously and in competition at the same active site. The polypeptide is Ribulose bisphosphate carboxylase large chain (Solanum bulbocastanum (Wild potato)).